The chain runs to 303 residues: N-acetylmuramic acid 6-phosphate etherase (303 aa).

The SIS domain maps to 62–225 (IVAAFRQGGR…TTASMVLLGK (164 aa)). E90 acts as the Proton donor in catalysis. The active site involves E121.

It belongs to the GCKR-like family. MurNAc-6-P etherase subfamily. In terms of assembly, homodimer.

It catalyses the reaction N-acetyl-D-muramate 6-phosphate + H2O = N-acetyl-D-glucosamine 6-phosphate + (R)-lactate. The protein operates within amino-sugar metabolism; 1,6-anhydro-N-acetylmuramate degradation. It functions in the pathway amino-sugar metabolism; N-acetylmuramate degradation. Its pathway is cell wall biogenesis; peptidoglycan recycling. Specifically catalyzes the cleavage of the D-lactyl ether substituent of MurNAc 6-phosphate, producing GlcNAc 6-phosphate and D-lactate. Together with AnmK, is also required for the utilization of anhydro-N-acetylmuramic acid (anhMurNAc) either imported from the medium or derived from its own cell wall murein, and thus plays a role in cell wall recycling. This chain is N-acetylmuramic acid 6-phosphate etherase, found in Histophilus somni (strain 129Pt) (Haemophilus somnus).